Reading from the N-terminus, the 383-residue chain is Putative glutamate--cysteine ligase 2-1 (383 aa).

Belongs to the glutamate--cysteine ligase type 2 family. YbdK subfamily.

It catalyses the reaction L-cysteine + L-glutamate + ATP = gamma-L-glutamyl-L-cysteine + ADP + phosphate + H(+). ATP-dependent carboxylate-amine ligase which exhibits weak glutamate--cysteine ligase activity. This chain is Putative glutamate--cysteine ligase 2-1, found in Legionella pneumophila (strain Corby).